The following is a 190-amino-acid chain: MSIILGIDPGSRVTGYGVIRQTGRHLEYLGSGAIRTQVEDLPTRLKRIYAGVTEIITQFQPDMFAIEQVFMAKNADSALKLGQARGTAIVAAVNHDLPVFEYAARLVKQTVVGIGSADKVQVQEMVTRILKLSDKPQADAADALAIAITHAHSIQHSLHIANSVKMTETQEKMTALLKTRYSRGRFRLKI.

Residues Asp-8, Glu-67, and Asp-139 contribute to the active site. Asp-8, Glu-67, and Asp-139 together coordinate Mg(2+).

It belongs to the RuvC family. As to quaternary structure, homodimer which binds Holliday junction (HJ) DNA. The HJ becomes 2-fold symmetrical on binding to RuvC with unstacked arms; it has a different conformation from HJ DNA in complex with RuvA. In the full resolvosome a probable DNA-RuvA(4)-RuvB(12)-RuvC(2) complex forms which resolves the HJ. Mg(2+) is required as a cofactor.

Its subcellular location is the cytoplasm. It carries out the reaction Endonucleolytic cleavage at a junction such as a reciprocal single-stranded crossover between two homologous DNA duplexes (Holliday junction).. In terms of biological role, the RuvA-RuvB-RuvC complex processes Holliday junction (HJ) DNA during genetic recombination and DNA repair. Endonuclease that resolves HJ intermediates. Cleaves cruciform DNA by making single-stranded nicks across the HJ at symmetrical positions within the homologous arms, yielding a 5'-phosphate and a 3'-hydroxyl group; requires a central core of homology in the junction. The consensus cleavage sequence is 5'-(A/T)TT(C/G)-3'. Cleavage occurs on the 3'-side of the TT dinucleotide at the point of strand exchange. HJ branch migration catalyzed by RuvA-RuvB allows RuvC to scan DNA until it finds its consensus sequence, where it cleaves and resolves the cruciform DNA. This chain is Crossover junction endodeoxyribonuclease RuvC, found in Haemophilus influenzae (strain PittGG).